The primary structure comprises 1400 residues: DNA-directed RNA polymerase subunit beta' (1400 aa).

Zn(2+) contacts are provided by Cys70, Cys72, Cys85, and Cys88. Mg(2+) is bound by residues Asp460, Asp462, and Asp464. Zn(2+) is bound by residues Cys814, Cys889, Cys896, and Cys899.

The protein belongs to the RNA polymerase beta' chain family. The RNAP catalytic core consists of 2 alpha, 1 beta, 1 beta' and 1 omega subunit. When a sigma factor is associated with the core the holoenzyme is formed, which can initiate transcription. Requires Mg(2+) as cofactor. It depends on Zn(2+) as a cofactor.

The catalysed reaction is RNA(n) + a ribonucleoside 5'-triphosphate = RNA(n+1) + diphosphate. Functionally, DNA-dependent RNA polymerase catalyzes the transcription of DNA into RNA using the four ribonucleoside triphosphates as substrates. This chain is DNA-directed RNA polymerase subunit beta', found in Alcanivorax borkumensis (strain ATCC 700651 / DSM 11573 / NCIMB 13689 / SK2).